The primary structure comprises 334 residues: L-lactate dehydrogenase B chain (334 aa).

NAD(+) contacts are provided by residues Gly-30–Lys-58 and Arg-100. Substrate-binding residues include Arg-107, Asn-139, and Arg-170. Asn-139 is an NAD(+) binding site. The active-site Proton acceptor is the His-194. Thr-249 serves as a coordination point for substrate.

Belongs to the LDH/MDH superfamily. LDH family. As to quaternary structure, homotetramer.

Its subcellular location is the cytoplasm. It catalyses the reaction (S)-lactate + NAD(+) = pyruvate + NADH + H(+). The protein operates within fermentation; pyruvate fermentation to lactate; (S)-lactate from pyruvate: step 1/1. Functionally, interconverts simultaneously and stereospecifically pyruvate and lactate with concomitant interconversion of NADH and NAD(+). The chain is L-lactate dehydrogenase B chain (ldhb) from Squalus acanthias (Spiny dogfish).